Consider the following 248-residue polypeptide: Ureidoacrylate amidohydrolase RutB (248 aa).

Asp41 (proton acceptor) is an active-site residue. Lys150 is an active-site residue. Cys183 serves as the catalytic Nucleophile.

This sequence belongs to the isochorismatase family. RutB subfamily.

It carries out the reaction (Z)-3-ureidoacrylate + H2O + H(+) = (Z)-3-aminoacrylate + NH4(+) + CO2. The catalysed reaction is (Z)-3-ureidoacrylate + H2O = (Z)-3-aminoacrylate + carbamate + H(+). It catalyses the reaction (Z)-2-methylureidoacrylate + H2O + H(+) = (Z)-2-methylaminoacrylate + NH4(+) + CO2. In terms of biological role, hydrolyzes ureidoacrylate to form aminoacrylate and carbamate. The carbamate hydrolyzes spontaneously, thereby releasing one of the nitrogen atoms of the pyrimidine ring as ammonia and one of its carbon atoms as CO2. This is Ureidoacrylate amidohydrolase RutB from Methylorubrum extorquens (strain CM4 / NCIMB 13688) (Methylobacterium extorquens).